The following is a 199-amino-acid chain: Pyridoxine/pyridoxamine 5'-phosphate oxidase (199 aa).

FMN contacts are provided by residues 45–50, 60–61, arginine 66, lysine 67, and glutamine 89; these read RVVLLK and FT. Lysine 50 lines the substrate pocket. Substrate-binding residues include tyrosine 107, arginine 111, and serine 115. FMN contacts are provided by residues 124 to 125 and tryptophan 169; that span reads QS. 175–177 provides a ligand contact to substrate; sequence RIH. Residue arginine 179 participates in FMN binding.

Belongs to the pyridoxamine 5'-phosphate oxidase family. Homodimer. Requires FMN as cofactor.

It carries out the reaction pyridoxamine 5'-phosphate + O2 + H2O = pyridoxal 5'-phosphate + H2O2 + NH4(+). The catalysed reaction is pyridoxine 5'-phosphate + O2 = pyridoxal 5'-phosphate + H2O2. It functions in the pathway cofactor metabolism; pyridoxal 5'-phosphate salvage; pyridoxal 5'-phosphate from pyridoxamine 5'-phosphate: step 1/1. The protein operates within cofactor metabolism; pyridoxal 5'-phosphate salvage; pyridoxal 5'-phosphate from pyridoxine 5'-phosphate: step 1/1. Functionally, catalyzes the oxidation of either pyridoxine 5'-phosphate (PNP) or pyridoxamine 5'-phosphate (PMP) into pyridoxal 5'-phosphate (PLP). This is Pyridoxine/pyridoxamine 5'-phosphate oxidase from Ehrlichia chaffeensis (strain ATCC CRL-10679 / Arkansas).